The following is a 659-amino-acid chain: MGEDVRRIASQSRPRPSTWAVSRPRPASWRNSRGARPESWRVSRQSFREWIEHWEFEHENRDQILELGHELEHVPDLTVDVTPPATSDGPADSIEKSKEDGDADDKRQSASDSTVKGKAKAVDIGKQQTRDAPYSVHSVGRRRLIVLAASLAGFFSPLSASIYYPALPVIAHNFHVSNSQINLTVTTYLIIQGIAPMITAGFSDTAGRRPAYAICFIVYLAANLGLALQNDYAALMVLRCLQSAGSSGAIALANGVVSDIVTPQERGSFIAFASLGSILGPTLSPVIGGLITQYLDWHWIFWFLLIFTGTFCVPFFLFFPETCRKVVGDGSIVPPPINRSLTDYLRKRKRVKSGTEANQPATKRQKMVIPNPLSTLQVFAVKQTAMILIPSGIAFGTFYAVLTGASNTFKVIYGFNQLKVSLMYIPLGVGGIASALSTGKLVDRNFRRHAEKLGITVTRNKRQDLSDFPLERARLEVGLPLFYLGTACLVIYGWILEKQYSVWGPIILMLVMSWTLAAFFQVMNVLLVDTYPGRGATVTAAVNLVRCELGAAAAAVISPMTDGVGEGWAYTIVAMIGFATTPLLLFTAVNGIRWRREAAEKEKIKKAGREAKIEAEKRAREEIETKKEAKQKAEEDVEIGDLEKQDRKDSQRPTSSKAT.

Disordered regions lie at residues 1–42 (MGED…SWRV) and 76–127 (DLTV…IGKQ). The segment covering 93-109 (SIEKSKEDGDADDKRQS) has biased composition (basic and acidic residues). Residues 144-164 (LIVLAASLAGFFSPLSASIYY) form a helical membrane-spanning segment. Asparagine 182 carries an N-linked (GlcNAc...) asparagine glycan. A run of 5 helical transmembrane segments spans residues 183–203 (LTVT…AGFS), 210–230 (PAYA…ALQN), 235–257 (LMVL…NGVV), 269–289 (FIAF…VIGG), and 299–319 (WIFW…FLFF). Asparagine 338 carries N-linked (GlcNAc...) asparagine glycosylation. 6 consecutive transmembrane segments (helical) span residues 385–405 (AMIL…LTGA), 422–442 (LMYI…GKLV), 475–495 (LEVG…YGWI), 502–522 (VWGP…FFQV), 549–569 (LGAA…EGWA), and 572–592 (IVAM…VNGI). Composition is skewed to basic and acidic residues over residues 605-634 (KKAG…QKAE) and 641-651 (DLEKQDRKDSQ). Positions 605 to 659 (KKAGREAKIEAEKRAREEIETKKEAKQKAEEDVEIGDLEKQDRKDSQRPTSSKAT) are disordered.

It belongs to the major facilitator superfamily.

It is found in the membrane. In terms of biological role, MFS-type transporter; part of the gene cluster that mediates the biosynthesis of the antihypercholesterolemic agents phomoidrides which are dimeric anhydrides. This Fungal sp. (strain ATCC 74256) protein is MFS-type transporter phiD.